The following is a 134-amino-acid chain: Small ribosomal subunit protein uS9 (134 aa).

The segment at 109 to 134 (DARRTEPHKPSKSSKGPRARRQKSYR) is disordered. Positions 118–134 (PSKSSKGPRARRQKSYR) are enriched in basic residues.

It belongs to the universal ribosomal protein uS9 family.

This Methanococcus vannielii (strain ATCC 35089 / DSM 1224 / JCM 13029 / OCM 148 / SB) protein is Small ribosomal subunit protein uS9.